The chain runs to 256 residues: 5-keto-4-deoxy-D-glucarate aldolase (256 aa).

Residue histidine 50 is the Proton acceptor of the active site. Glutamine 151 contributes to the substrate binding site. A Mg(2+)-binding site is contributed by glutamate 153. Residues serine 178 and aspartate 179 each coordinate substrate. Position 179 (aspartate 179) interacts with Mg(2+).

It belongs to the HpcH/HpaI aldolase family. KDGluc aldolase subfamily. Homohexamer; trimer of dimers. Requires Mg(2+) as cofactor.

It carries out the reaction 5-dehydro-4-deoxy-D-glucarate = 2-hydroxy-3-oxopropanoate + pyruvate. The catalysed reaction is 2-dehydro-3-deoxy-D-glucarate = 2-hydroxy-3-oxopropanoate + pyruvate. The protein operates within carbohydrate acid metabolism; galactarate degradation; D-glycerate from galactarate: step 2/3. Catalyzes the reversible retro-aldol cleavage of both 5-keto-4-deoxy-D-glucarate and 2-keto-3-deoxy-D-glucarate to pyruvate and tartronic semialdehyde. This is 5-keto-4-deoxy-D-glucarate aldolase from Escherichia coli (strain K12 / DH10B).